Consider the following 200-residue polypeptide: Large ribosomal subunit protein bL25 (200 aa).

The disordered stretch occupies residues 1–20; the sequence is MEARELKANVRKESGKEQAR.

It belongs to the bacterial ribosomal protein bL25 family. CTC subfamily. Part of the 50S ribosomal subunit; part of the 5S rRNA/L5/L18/L25 subcomplex. Contacts the 5S rRNA. Binds to the 5S rRNA independently of L5 and L18.

This is one of the proteins that binds to the 5S RNA in the ribosome where it forms part of the central protuberance. This Syntrophus aciditrophicus (strain SB) protein is Large ribosomal subunit protein bL25.